A 319-amino-acid polypeptide reads, in one-letter code: UPF0761 membrane protein PBPRA3489 (319 aa).

The next 6 helical transmembrane spans lie at 50–70, 107–127, 143–163, 188–208, 215–235, and 249–269; these read LVPM…FAGL, VGIG…DHAL, FSIY…SIAV, ALPV…VPNL, ALLG…GFAL, and ALAV…IVLL.

It belongs to the UPF0761 family.

The protein resides in the cell inner membrane. The chain is UPF0761 membrane protein PBPRA3489 from Photobacterium profundum (strain SS9).